A 154-amino-acid polypeptide reads, in one-letter code: Ubiquitin-conjugating enzyme E2 L3 (154 aa).

Residues Ala-2–Glu-149 form the UBC core domain. The active-site Glycyl thioester intermediate is Cys-86. Lys-131 is subject to N6-acetyllysine.

It belongs to the ubiquitin-conjugating enzyme family. Interacts with PRKN; involved in ubiquitination and degradation of misfolded proteins. Interacts with UBE3A. Interacts with CCNB1IP1, CBL, ZAP70, RNF19A, RNF19B and RNF144B. Interacts with ARIH1. Interacts with ARIH2 (via RING-type 1). Interacts with NCOA1; they functionally interact to regulate progesterone receptor transcriptional activity. Interacts with NDFIP1 (via N-terminus); the interaction mediates recruitment of UBE2L3 to ITCH and causes MAP3K7 ubiquitination. In terms of processing, ubiquitinated. The alteration of UBE2L3 protein levels during the S-phase of the cell cycle is due to ubiquitin-dependent proteasomal degradation. Autoubiquitinated in vitro.

It localises to the nucleus. It is found in the cytoplasm. The enzyme catalyses S-ubiquitinyl-[E1 ubiquitin-activating enzyme]-L-cysteine + [E2 ubiquitin-conjugating enzyme]-L-cysteine = [E1 ubiquitin-activating enzyme]-L-cysteine + S-ubiquitinyl-[E2 ubiquitin-conjugating enzyme]-L-cysteine.. The protein operates within protein modification; protein ubiquitination. Functionally, ubiquitin-conjugating enzyme E2 that specifically acts with HECT-type and RBR family E3 ubiquitin-protein ligases. Does not function with most RING-containing E3 ubiquitin-protein ligases because it lacks intrinsic E3-independent reactivity with lysine: in contrast, it has activity with the RBR family E3 enzymes, such as PRKN, RNF31 and ARIH1, that function like RING-HECT hybrids. Accepts ubiquitin from the E1 complex and catalyzes its covalent attachment to other proteins. Mediates ubiquitination by the CUL9-RBX1 complex. In vitro catalyzes 'Lys-11'-linked polyubiquitination. Involved in the selective degradation of short-lived and abnormal proteins. Down-regulated during the S-phase it is involved in progression through the cell cycle. Regulates nuclear hormone receptors transcriptional activity. May play a role in myelopoiesis. This is Ubiquitin-conjugating enzyme E2 L3 (UBE2L3) from Bos taurus (Bovine).